The following is a 216-amino-acid chain: MOB kinase activator 3C (216 aa).

Zn(2+) contacts are provided by Cys82, Cys87, His164, and His169.

Belongs to the MOB1/phocein family.

Functionally, may regulate the activity of kinases. The protein is MOB kinase activator 3C (MOB3C) of Bos taurus (Bovine).